The primary structure comprises 400 residues: 3-phenylpropionate/cinnamic acid dioxygenase ferredoxin--NAD(+) reductase component (400 aa).

5 to 36 (TIIIVGGGQAAAMAAASLRQQGFTGELHLFSD) contributes to the FAD binding site. 146 to 174 (SVVIIGAGTIGLELAASATQRRCKVTVIE) lines the NAD(+) pocket.

It belongs to the bacterial ring-hydroxylating dioxygenase ferredoxin reductase family. This dioxygenase system consists of four proteins: the two subunits of the hydroxylase component (HcaE and HcaF), a ferredoxin (HcaC) and a ferredoxin reductase (HcaD). FAD serves as cofactor.

The catalysed reaction is 2 reduced [2Fe-2S]-[ferredoxin] + NAD(+) + H(+) = 2 oxidized [2Fe-2S]-[ferredoxin] + NADH. The protein operates within aromatic compound metabolism; 3-phenylpropanoate degradation. Its function is as follows. Part of the multicomponent 3-phenylpropionate dioxygenase, that converts 3-phenylpropionic acid (PP) and cinnamic acid (CI) into 3-phenylpropionate-dihydrodiol (PP-dihydrodiol) and cinnamic acid-dihydrodiol (CI-dihydrodiol), respectively. The polypeptide is 3-phenylpropionate/cinnamic acid dioxygenase ferredoxin--NAD(+) reductase component (Escherichia coli (strain K12 / MC4100 / BW2952)).